The following is a 245-amino-acid chain: Ribonuclease PH (245 aa).

Residues Arg-86 and 124 to 126 contribute to the phosphate site; that span reads GTR.

This sequence belongs to the RNase PH family. As to quaternary structure, homohexameric ring arranged as a trimer of dimers.

It carries out the reaction tRNA(n+1) + phosphate = tRNA(n) + a ribonucleoside 5'-diphosphate. Phosphorolytic 3'-5' exoribonuclease that plays an important role in tRNA 3'-end maturation. Removes nucleotide residues following the 3'-CCA terminus of tRNAs; can also add nucleotides to the ends of RNA molecules by using nucleoside diphosphates as substrates, but this may not be physiologically important. Probably plays a role in initiation of 16S rRNA degradation (leading to ribosome degradation) during starvation. The protein is Ribonuclease PH of Bacillus cytotoxicus (strain DSM 22905 / CIP 110041 / 391-98 / NVH 391-98).